We begin with the raw amino-acid sequence, 464 residues long: ATP synthase subunit beta (464 aa).

150-157 lines the ATP pocket; it reads GGAGVGKT.

Belongs to the ATPase alpha/beta chains family. As to quaternary structure, F-type ATPases have 2 components, CF(1) - the catalytic core - and CF(0) - the membrane proton channel. CF(1) has five subunits: alpha(3), beta(3), gamma(1), delta(1), epsilon(1). CF(0) has three main subunits: a(1), b(2) and c(9-12). The alpha and beta chains form an alternating ring which encloses part of the gamma chain. CF(1) is attached to CF(0) by a central stalk formed by the gamma and epsilon chains, while a peripheral stalk is formed by the delta and b chains.

The protein resides in the cell membrane. The catalysed reaction is ATP + H2O + 4 H(+)(in) = ADP + phosphate + 5 H(+)(out). Produces ATP from ADP in the presence of a proton gradient across the membrane. The catalytic sites are hosted primarily by the beta subunits. The chain is ATP synthase subunit beta from Dehalococcoides mccartyi (strain ATCC BAA-2266 / KCTC 15142 / 195) (Dehalococcoides ethenogenes (strain 195)).